The chain runs to 612 residues: Cyclin-dependent kinase 8 (612 aa).

One can recognise a Protein kinase domain in the interval 23-345 (FENSKEIGRG…CEEAMNDIYF (323 aa)). ATP is bound by residues 29-37 (IGRGTYGLV) and K57. D155 functions as the Proton acceptor in the catalytic mechanism. Low complexity-rich tracts occupy residues 403–455 (QQQM…MGQP), 472–483 (HQMMQQQHQSQH), 543–555 (PQPG…QQRP), 564–573 (QGYMNPQMGM), and 600–612 (NPQQ…QYHR). Disordered stretches follow at residues 403-483 (QQQM…QSQH) and 543-612 (PQPG…QYHR).

The protein belongs to the protein kinase superfamily. CMGC Ser/Thr protein kinase family. CDC2/CDKX subfamily. Component of the Mediator complex. Mg(2+) is required as a cofactor.

Its subcellular location is the nucleus. It carries out the reaction L-seryl-[protein] + ATP = O-phospho-L-seryl-[protein] + ADP + H(+). It catalyses the reaction L-threonyl-[protein] + ATP = O-phospho-L-threonyl-[protein] + ADP + H(+). The enzyme catalyses [DNA-directed RNA polymerase] + ATP = phospho-[DNA-directed RNA polymerase] + ADP + H(+). Component of the Mediator complex, a coactivator involved in regulated gene transcription of nearly all RNA polymerase II-dependent genes. Mediator functions as a bridge to convey information from gene-specific regulatory proteins to the basal RNA polymerase II transcription machinery. Mediator is recruited to promoters by direct interactions with regulatory proteins and serves as a scaffold for the assembly of a functional pre-initiation complex with RNA polymerase II and the general transcription factors. Phosphorylates the CTD (C-terminal domain) of the large subunit of RNA polymerase II (RNAp II), which may inhibit the formation of a transcription initiation complex. This chain is Cyclin-dependent kinase 8 (cdk-8), found in Caenorhabditis briggsae.